Reading from the N-terminus, the 222-residue chain is MCPLRSLFLMATLVFLNHLDHLSLARSLPTTTAGPGMFQCLSHSQNLLRAVSDTLQKARQTLEFYSCTSEEIDHEDITKDKTSTVEACLPLELATNESCLASRETSLITHGSCLASGKTSFMTTLCLSSIYEDLKMYHMEFQAMNAKLLMDPKRQIFLDQNMLVAIAELMQALNVSGETVPQKPSLEEPDFYKTKVKLCILLHAFRIRAVTIDRMMSYLSSS.

Residues 1–25 (MCPLRSLFLMATLVFLNHLDHLSLA) form the signal peptide. Disulfide bonds link C40–C113, C67–C199, and C88–C126. Residues N96 and N174 are each glycosylated (N-linked (GlcNAc...) asparagine).

It belongs to the IL-6 superfamily. As to quaternary structure, heterodimer with IL12B; disulfide-linked. This heterodimer is known as interleukin IL-12. Heterodimer with EBI3/IL27B; not disulfide-linked. This heterodimer is known as interleukin IL-35. Interacts with NBR1; this interaction promotes IL-12 secretion.

It is found in the secreted. Functionally, heterodimerizes with IL12B to form the IL-12 cytokine or with EBI3/IL27B to form the IL-35 cytokine. IL-12 is primarily produced by professional antigen-presenting cells (APCs) such as B-cells and dendritic cells (DCs) as well as macrophages and granulocytes and regulates T-cell and natural killer-cell responses, induces the production of interferon-gamma (IFN-gamma), favors the differentiation of T-helper 1 (Th1) cells and is an important link between innate resistance and adaptive immunity. Mechanistically, exerts its biological effects through a receptor composed of IL12R1 and IL12R2 subunits. Binding to the receptor results in the rapid tyrosine phosphorylation of a number of cellular substrates including the JAK family kinases TYK2 and JAK2. In turn, recruited STAT4 gets phosphorylated and translocates to the nucleus where it regulates cytokine/growth factor responsive genes. As part of IL-35, plays essential roles in maintaining the immune homeostasis of the liver microenvironment and also functions as an immune-suppressive cytokine. Mediates biological events through unconventional receptors composed of IL12RB2 and gp130/IL6ST heterodimers or homodimers. Signaling requires the transcription factors STAT1 and STAT4, which form a unique heterodimer that binds to distinct DNA sites. This chain is Interleukin-12 subunit alpha (IL12A), found in Lama glama (Llama).